An 88-amino-acid polypeptide reads, in one-letter code: Large ribosomal subunit protein bL31B (88 aa).

This sequence belongs to the bacterial ribosomal protein bL31 family. Type B subfamily. As to quaternary structure, part of the 50S ribosomal subunit.

This is Large ribosomal subunit protein bL31B from Corynebacterium diphtheriae (strain ATCC 700971 / NCTC 13129 / Biotype gravis).